We begin with the raw amino-acid sequence, 131 residues long: Large ribosomal subunit protein bL17 (131 aa).

It belongs to the bacterial ribosomal protein bL17 family. In terms of assembly, part of the 50S ribosomal subunit. Contacts protein L32.

The protein is Large ribosomal subunit protein bL17 of Azoarcus sp. (strain BH72).